We begin with the raw amino-acid sequence, 638 residues long: Growth hormone receptor (638 aa).

Positions 1–18 (MDLWRVFLTLALAVSSDM) are cleaved as a signal peptide. At 19–265 (FPGSGATPAT…TLAACEEDFR (247 aa)) the chain is on the extracellular side. 2 cysteine pairs are disulfide-bonded: C56–C66 and C101–C112. An N-linked (GlcNAc...) asparagine glycan is attached at N115. Cysteines 126 and 140 form a disulfide. Residues 151–254 (PPIGLNWTLL…EVLRVTFPQM (104 aa)) form the Fibronectin type-III domain. N-linked (GlcNAc...) asparagine glycosylation is found at N156, N161, and N200. The WSXWS motif motif lies at 240-244 (YSEFS). A helical membrane pass occupies residues 266–289 (FPWFLIIIFGIFGVAVMLFVVIFS). Residues 290–638 (KQQRIKMLIL…STDQLNKIMQ (349 aa)) lie on the Cytoplasmic side of the membrane. The tract at residues 295–380 (KMLILPPVPV…QEKSAGILGA (86 aa)) is required for JAK2 binding. Residues 298–306 (ILPPVPVPK) carry the Box 1 motif motif. A UbE motif motif is present at residues 341–350 (DSWVEFIELD). Phosphoserine is present on S342. The segment at 357 to 389 (KTEESDTDRLLSDDQEKSAGILGAKDDDSGRTS) is disordered. The segment covering 363–373 (TDRLLSDDQEK) has biased composition (basic and acidic residues). 2 positions are modified to phosphotyrosine: Y487 and Y594.

The protein belongs to the type I cytokine receptor family. Type 1 subfamily. As to quaternary structure, on growth hormone (GH) binding, forms homodimers and binds JAK2 via a box 1-containing domain. The soluble form (GHBP) is produced by phorbol ester-promoted proteolytic cleavage at the cell surface (shedding) by ADAM17/TACE. Shedding is inhibited by growth hormone (GH) binding to the receptor probably due to a conformational change in GHR rendering the receptor inaccessible to ADAM17. In terms of processing, on GH binding, phosphorylated on tyrosine residues in the cytoplasmic domain by JAK2. Phosphorylation on either (or all of) Tyr-534, Tyr-566 and/or Tyr-627 is required for STAT5 activation. Phosphorylation on Tyr-333 would seem necessary for JAK2 activation. Post-translationally, ubiquitinated by the ECS(SOCS2) complex following ligand-binding and phosphorylation by JAK2, leading to its degradation by the proteasome. Regulation by the ECS(SOCS2) complex acts as a negative feedback loop of growth hormone receptor signaling. Ubiquitination is not sufficient for GHR internalization. As to expression, highest expression in liver. Also expressed in heart, kidney and muscle.

Its subcellular location is the cell membrane. The protein localises to the secreted. Functionally, receptor for pituitary gland growth hormone involved in regulating postnatal body growth. On ligand binding, couples to, and activates the JAK2/STAT5 pathway. In terms of biological role, receptor for pituitary gland growth hormone (GH1) involved in regulating postnatal body growth. On ligand binding, couples to the JAK2/STAT5 pathway. The soluble form (GHBP) acts as a reservoir of growth hormone in plasma and may be a modulator/inhibitor of GH signaling. This is Growth hormone receptor (Ghr) from Rattus norvegicus (Rat).